The following is a 349-amino-acid chain: NADH-quinone oxidoreductase subunit H (349 aa).

8 helical membrane passes run 16–36 (WPVV…MGCV), 88–108 (GLFI…WAVV), 123–143 (LLFL…AGWA), 157–177 (AAQM…VLLI), 202–222 (FLSW…ISGI), 264–284 (ILVS…PVGF), 285–305 (LPDG…IFLW), and 325–345 (VFIP…MSPL).

It belongs to the complex I subunit 1 family. In terms of assembly, NDH-1 is composed of 14 different subunits. Subunits NuoA, H, J, K, L, M, N constitute the membrane sector of the complex.

It is found in the cell inner membrane. It catalyses the reaction a quinone + NADH + 5 H(+)(in) = a quinol + NAD(+) + 4 H(+)(out). In terms of biological role, NDH-1 shuttles electrons from NADH, via FMN and iron-sulfur (Fe-S) centers, to quinones in the respiratory chain. The immediate electron acceptor for the enzyme in this species is believed to be ubiquinone. Couples the redox reaction to proton translocation (for every two electrons transferred, four hydrogen ions are translocated across the cytoplasmic membrane), and thus conserves the redox energy in a proton gradient. This subunit may bind ubiquinone. This chain is NADH-quinone oxidoreductase subunit H, found in Azoarcus sp. (strain BH72).